The primary structure comprises 88 residues: Probable small nuclear ribonucleoprotein F (88 aa).

One can recognise a Sm domain in the interval 7 to 79; that stretch reads NPKPFLNNLT…VLYVRGVPED (73 aa).

Belongs to the snRNP Sm proteins family. SmF/LSm6 subfamily.

Its subcellular location is the nucleus. In terms of biological role, probable common Sm protein, is found in U1 and U2 snRNPs and may be part of the spliceosome. This chain is Probable small nuclear ribonucleoprotein F, found in Arabidopsis thaliana (Mouse-ear cress).